Reading from the N-terminus, the 182-residue chain is T-cell surface glycoprotein CD3 gamma chain (182 aa).

The signal sequence occupies residues 1–22 (MEQGKHLAGLILAITLLQGTMA). The Ig-like domain maps to 23 to 98 (QLKEGKHSVL…GSKENSKRLQ (76 aa)). The Extracellular portion of the chain corresponds to 23–116 (QLKEGKHSVL…CIELNSATVS (94 aa)). Cysteines 46 and 87 form a disulfide. The N-linked (GlcNAc...) asparagine glycan is linked to asparagine 66. Residues 117–137 (GFIFTEIISLFFLAVGVYFIA) traverse the membrane as a helical segment. Residues 138–182 (GQDGVRQSRASDKQTLLSNDQLYQPLKDREDDQYSHLQGNNSRKN) lie on the Cytoplasmic side of the membrane. Serine 145 bears the Phosphoserine mark. Serine 148 carries the phosphoserine; by PKC modification. In terms of domain architecture, ITAM spans 149–177 (DKQTLLSNDQLYQPLKDREDDQYSHLQGN). A Di-leucine motif motif is present at residues 153-154 (LL).

In terms of assembly, the TCR-CD3 complex is composed of a CD3D/CD3E and a CD3G/CD3E heterodimers that preferentially associate with TCRalpha and TCRbeta, respectively, to form TCRalpha/CD3E/CD3G and TCRbeta/CD3G/CD3E trimers. In turn, the hexamer interacts with CD3Z homodimer to form the TCR-CD3 complex. Alternatively, TCRalpha and TCRbeta can be replaced by TCRgamma and TCRdelta. Phosphorylated on Tyr residues after T-cell receptor triggering by LCK in association with CD4/CD8. Phosphorylated also by PKC; leading to the TCR complex down-regulation. Post-translationally, phosphorylated on Tyr residues after T-cell receptor triggering by LCK in association with CD4/CD8.

Its subcellular location is the cell membrane. In terms of biological role, part of the TCR-CD3 complex present on T-lymphocyte cell surface that plays an essential role in adaptive immune response. When antigen presenting cells (APCs) activate T-cell receptor (TCR), TCR-mediated signals are transmitted across the cell membrane by the CD3 chains CD3D, CD3E, CD3G and CD3Z. All CD3 chains contain immunoreceptor tyrosine-based activation motifs (ITAMs) in their cytoplasmic domain. Upon TCR engagement, these motifs become phosphorylated by Src family protein tyrosine kinases LCK and FYN, resulting in the activation of downstream signaling pathways. In addition to this role of signal transduction in T-cell activation, CD3G plays an essential role in the dynamic regulation of TCR expression at the cell surface. Indeed, constitutive TCR cycling is dependent on the di-leucine-based (diL) receptor-sorting motif present in CD3G. The polypeptide is T-cell surface glycoprotein CD3 gamma chain (CD3G) (Sus scrofa (Pig)).